The following is a 355-amino-acid chain: Mannonate dehydratase (355 aa).

It belongs to the mannonate dehydratase family. The cofactor is Fe(2+). Mn(2+) is required as a cofactor.

The catalysed reaction is D-mannonate = 2-dehydro-3-deoxy-D-gluconate + H2O. It functions in the pathway carbohydrate metabolism; pentose and glucuronate interconversion. Functionally, catalyzes the dehydration of D-mannonate. In Brachyspira hyodysenteriae (strain ATCC 49526 / WA1), this protein is Mannonate dehydratase.